We begin with the raw amino-acid sequence, 145 residues long: Large ribosomal subunit protein uL16 (145 aa).

This sequence belongs to the universal ribosomal protein uL16 family. As to quaternary structure, part of the 50S ribosomal subunit.

Its function is as follows. Binds 23S rRNA and is also seen to make contacts with the A and possibly P site tRNAs. This is Large ribosomal subunit protein uL16 from Exiguobacterium sp. (strain ATCC BAA-1283 / AT1b).